A 37-amino-acid polypeptide reads, in one-letter code: Large ribosomal subunit protein bL36A (37 aa).

It belongs to the bacterial ribosomal protein bL36 family.

This chain is Large ribosomal subunit protein bL36A, found in Arthrobacter sp. (strain FB24).